The primary structure comprises 744 residues: MAKREDSPGPEVQPMDKQFLVCSICLDRYRCPKVLPCLHTFCERCLQNYIPPQSLTLSCPVCRQTSILPEQGVSALQNNFFISSLMEAMQQAPDGAHDPEDPHPLSAVAGRPLSCPNHEGKTMEFYCEACETAMCGECRAGEHREHGTVLLRDVVEQHKAALQRQLEAVRGRLPQLSAAIALVGGISQQLQERKAEALAQISAAFEDLEQALQQRKQALVSDLESICGAKQKVLQTQLDTLRQGQEHIGSSCSFAEQALRLGSAPEVLLVRKHMRERLAALAAQAFPERPHENAQLELVLEVDGLRRSVLNLGALLTTSAAAHETVATGEGLRQALVGQPASLTVTTKDKDGRLVRTGSAELCAEITGPDGMRLAVPVVDHKNGTYELVYTARTEGDLLLSVLLYGQPVRGSPFRVRALRPGDLPPSPDDVKRRVKSPGGPGSHVRQKAVRRPSSMYSTGGKRKDNPIVDELVFRVGSRGREKGEFTNLHPLSAASSGRIVVADSNNQCIQVFSNEGQFKFRFGVRGRSPGQLQRPTGVAVDTNGDIIVADYDNRWVSIFSPEGKFKTKIGAGRLMGPKGVAVDRNGHIIVVDNKSCCVFTFQPNGKLVGRFGGRGATDRHFAGPHFVAVNNKNEIVVTDFHNHSVKVYSADGEFLFKFGSHGEGNGQFNAPTGVAVDSNGNIIVADWGNSRIQVFDSSGSFLSYINTSAEPLYGPQGLALTSDGHVVVADAGNHCFKAYRYLQ.

The residue at position 2 (Ala2) is an N-acetylalanine. The segment at Ala2–Pro290 is interaction with KIF21B. The residue at position 7 (Ser7) is a Phosphoserine. The RING-type zinc-finger motif lies at Cys22–Arg63. A B box-type zinc finger spans residues Gly110–Leu151. Positions 115, 118, 138, and 143 each coordinate Zn(2+). Positions Asp153–Glu224 form a coiled coil. Residues Thr317–Ala418 form a Filamin repeat. Positions Arg420–Lys462 are disordered. Ser427 is modified (phosphoserine). NHL repeat units lie at residues Val473–Glu516, Lys520–Glu563, Gly564–Asn605, Val609–Asp652, Leu656–Ser699, and Gly700–Leu743.

Belongs to the TRIM/RBCC family. In terms of assembly, forms homooligomers. Interacts with TRIM2; this interaction reduces TRIM2 activity. Associates with myosin-Vb (MYO5B) and alpha-actinin-4 (ACTN4). Component of the CART complex, at least composed of ACTN4, HGS/HRS, MYO5B and TRIM3. Interacts with ZFYVE28/LST2. Interacts with KIF21B. As to expression, highly expressed in the brain, moderate levels in the lung, very low levels in the liver, kidney and heart. In the brain, expression was highest in the cerebellum. Expression in the brain is found at low levels at embryonic day 15 and then increases during the first two postnatal weeks before decreasing through adulthood.

The protein localises to the cytoplasm. It localises to the early endosome. The protein resides in the golgi apparatus. It is found in the trans-Golgi network. Its subcellular location is the cell projection. The protein localises to the dendrite. It carries out the reaction S-ubiquitinyl-[E2 ubiquitin-conjugating enzyme]-L-cysteine + [acceptor protein]-L-lysine = [E2 ubiquitin-conjugating enzyme]-L-cysteine + N(6)-ubiquitinyl-[acceptor protein]-L-lysine.. Its function is as follows. E3 ubiquitin ligase that plays essential roles in neuronal functions such as regulation of neuronal plasticity, learning, and memory. In addition to its neuronal functions, participates in other biological processes such as innate immunity or cell cycle regulation. Component of the cytoskeleton-associated recycling or transport complex in neurons, polyubiquitinates gamma-actin, thus regulating neuronal plasticity, learning, and memory. Ubiquitinates postsynaptic scaffold GKAP, a neuronal substrate involved in synaptic remodeling and thereby modulates dendritic spine morphology. Positively regulates motility of microtubule-dependent motor protein KIF21B. Induces growth arrest via its RING-dependent E3 ligase activity and ubiquinates CDKN1A. Positively regulates TLR3-mediated signaling by mediating 'Lys-63'-linked polyubiquitination of TLR3. In turn, promotes the recognition and sorting of polyubiquitinated TLR3 by the ESCRT complexes. The chain is Tripartite motif-containing protein 3 (Trim3) from Rattus norvegicus (Rat).